Here is a 214-residue protein sequence, read N- to C-terminus: External core antigen (214 aa).

The N-terminal stretch at Met-1–Ala-19 is a signal peptide. Positions Gly-25–Leu-27 are HBEAG. The interval Asn-165–Cys-214 is disordered. Residues Val-178 to Ser-207 show a composition bias toward basic residues. A 1; half-length repeat occupies Ser-186–Pro-192. Positions Ser-186–Gln-208 are 3 X 8 AA repeats of S-P-R-R-R-R-S-Q. Positions Ser-186–Cys-214 are excised as a propeptide. Repeat copies occupy residues Ser-193 to Gln-200 and Ser-201 to Gln-208.

It belongs to the orthohepadnavirus precore antigen family. As to quaternary structure, homodimerizes. Post-translationally, phosphorylated. In terms of processing, cleaved by host furin.

It is found in the secreted. The protein localises to the host nucleus. In terms of biological role, may regulate immune response to the intracellular capsid in acting as a T-cell tolerogen, by having an immunoregulatory effect which prevents destruction of infected cells by cytotoxic T-cells. This immune regulation may predispose to chronicity during perinatal infections and prevent severe liver injury during adult infections. In Homo sapiens (Human), this protein is External core antigen.